We begin with the raw amino-acid sequence, 197 residues long: dCTP deaminase (197 aa).

DCTP is bound by residues 110–115 (RSSLAR), D128, 136–138 (VLE), Y171, and Q182. The active-site Proton donor/acceptor is the E138.

Belongs to the dCTP deaminase family. Homotrimer.

It catalyses the reaction dCTP + H2O + H(+) = dUTP + NH4(+). It participates in pyrimidine metabolism; dUMP biosynthesis; dUMP from dCTP (dUTP route): step 1/2. Catalyzes the deamination of dCTP to dUTP. The sequence is that of dCTP deaminase from Alteromonas mediterranea (strain DSM 17117 / CIP 110805 / LMG 28347 / Deep ecotype).